The chain runs to 252 residues: MPPAKMSIRDLNFYYGDFQALKNINIDIPDKKVTAFIGPSGCGKSTLLRTFNRMYDLYPGMRAEGNINLDGKNILGKDIDVNLLRAQVGMVFQKPTPFPMSIYDNVAFGVRLYEKLSKAEMDNRVEWALKKAALWLEVKDKLRASGLSLSGGQQQRLCIARGVATKPEVLLLDEPTSALDPISTGAIEELITDLKNDYTIAIVTHNMQQAARVSDYTAYMYLGDMVEMGETDQIFTNPAQKATEDYITGRYG.

The ABC transporter domain maps to 6–247; sequence MSIRDLNFYY…PAQKATEDYI (242 aa). 38–45 serves as a coordination point for ATP; it reads GPSGCGKS.

This sequence belongs to the ABC transporter superfamily. Phosphate importer (TC 3.A.1.7) family. As to quaternary structure, the complex is composed of two ATP-binding proteins (PstB), two transmembrane proteins (PstC and PstA) and a solute-binding protein (PstS).

It localises to the cell inner membrane. The catalysed reaction is phosphate(out) + ATP + H2O = ADP + 2 phosphate(in) + H(+). In terms of biological role, part of the ABC transporter complex PstSACB involved in phosphate import. Responsible for energy coupling to the transport system. This Psychrobacter cryohalolentis (strain ATCC BAA-1226 / DSM 17306 / VKM B-2378 / K5) protein is Phosphate import ATP-binding protein PstB.